The primary structure comprises 90 residues: U7-theraphotoxin-Hhn1l (90 aa).

A signal peptide spans 1 to 19 (MKTAIFTVVLALAVFAVLS). Residues 20–50 (FGWEANEKALSEEFTELIHEKEAASETEARE) constitute a propeptide that is removed on maturation. Intrachain disulfides connect cysteine 51/cysteine 65, cysteine 58/cysteine 70, and cysteine 64/cysteine 81.

The protein belongs to the neurotoxin 10 (Hwtx-1) family. 13 (Hntx-13) subfamily. Expressed by the venom gland.

The protein localises to the secreted. In terms of biological role, ion channel inhibitor. The protein is U7-theraphotoxin-Hhn1l of Cyriopagopus hainanus (Chinese bird spider).